We begin with the raw amino-acid sequence, 477 residues long: Dihydrolipoyl dehydrogenase (477 aa).

FAD-binding positions include 41–50, lysine 59, glycine 124, and 153–155; these read EKRGALGGTC and TGS. The cysteines at positions 50 and 55 are disulfide-linked. NAD(+)-binding positions include 190-197, glutamate 213, valine 248, and glycine 282; that span reads GGGVIGLE. FAD is bound by residues aspartate 323 and 330–333; that span reads MLAH. Catalysis depends on histidine 456, which acts as the Proton acceptor.

This sequence belongs to the class-I pyridine nucleotide-disulfide oxidoreductase family. Homodimer. FAD is required as a cofactor.

The enzyme catalyses N(6)-[(R)-dihydrolipoyl]-L-lysyl-[protein] + NAD(+) = N(6)-[(R)-lipoyl]-L-lysyl-[protein] + NADH + H(+). In Trypanosoma cruzi, this protein is Dihydrolipoyl dehydrogenase (LPD).